The following is a 777-amino-acid chain: Protein translocase subunit SecA (777 aa).

ATP is bound by residues Q94, 112 to 116 (GEGKT), and D501.

Belongs to the SecA family. In terms of assembly, monomer and homodimer. Part of the essential Sec protein translocation apparatus which comprises SecA, SecYEG and auxiliary proteins SecDF. Other proteins may also be involved.

It is found in the cell membrane. The protein resides in the cytoplasm. It carries out the reaction ATP + H2O + cellular proteinSide 1 = ADP + phosphate + cellular proteinSide 2.. In terms of biological role, part of the Sec protein translocase complex. Interacts with the SecYEG preprotein conducting channel. Has a central role in coupling the hydrolysis of ATP to the transfer of proteins into and across the cell membrane, serving as an ATP-driven molecular motor driving the stepwise translocation of polypeptide chains across the membrane. The polypeptide is Protein translocase subunit SecA (Mycobacterium avium (strain 104)).